The primary structure comprises 336 residues: Cytochrome P450 monooxygenase lcsN (336 aa).

Heme is bound at residue cysteine 271.

Belongs to the cytochrome P450 family. The cofactor is heme.

It functions in the pathway secondary metabolite biosynthesis. In terms of biological role, cytochrome P450 monooxygenase; part of the gene cluster that mediates the biosynthesis of the lipopeptide antibiotics leucinostatins that show extensive biological activities, including antimalarial, antiviral, antibacterial, antifungal, and antitumor activities, as well as phytotoxic. Leucinostatin A contains nine amino acid residues, including the unusual amino acid 4-methyl-L-proline (MePro), 2-amino-6-hydroxy-4-methyl-8-oxodecanoic acid (AHyMeOA), 3-hydroxyleucine (HyLeu), alpha-aminoisobutyric acid (AIB), beta-Ala, a 4-methylhex-2-enoic acid at the N-terminus as well as a N1,N1-dimethylpropane-1,2-diamine (DPD) at the C-terminus. The biosynthesis of leucinostatins is probably initiated with the assembly of 4-methylhex-2-enoic acid by a reducing PKS. Two reducing polyketide synthases, lcsB and lcsC, have been identified in the cluster and it is not clear which is the one that assembles 4-methylhex-2-enoic acid since both contain KS, AT, DH, cMT, ER, KR and ACP domains. The polyketide residue might be transferred to the NRPS lcsA, mediated by two additional enzymes, the acyl-CoA ligase lcsD and the thioesterase lcsE. The linear polyketide carboxylic acid, which is released from PKS, is converted to a CoA thioester by lcsD, and then lcsE hydrolyzes the thiol bond and shuttles the polyketide intermediate to lcsA. The C domain of the first module catalyzed the condensation of 4-methylhex-2-enoic acid and MePro carried by domain A1, followed by successive condensations of nine amino acids to trigger the elongation of the linear peptide. A5 and A6 domains of lcsA are proposed to incorporate leucine, A2 AHyMeOA, and A3 incorporates HyLeu. A4, A7 and A8 incorporate AIB. The AHyMeOA in leucinostatin A activated by the A2 might be produced by the second PKS (lcsB or lcsC) present within the cluster. The MePro is probably produced via leucine cyclization and may originate from a separate pathway, independent of the cluster. Another nonproteinogenic amino acid, beta-Ala, could be produced by an aspartic acid decarboxylase also localized outside of the cluster. Two candidates are VFPBJ_01400 and VFPBJ_10476. The final peptide scaffold may be released by the NAD(P)H-dependent thioester reductase (TE) at the C-terminal region of lcsA. Transamination of the lcsA product by the transaminase lcsP may produce DPD at the C-terminus. Further hydroxylation steps performed alternatively by the cytochrome P450 monooxygenases lcsI, lcsK and lcsN then yield the non-methylated leucinostatins precursor. It is also possible that leucines can be hydroxylated prior to their incorporation into the peptide. Varying extents of methylation then lead to the formation of leucinostatins A and B. This Purpureocillium lilacinum (Paecilomyces lilacinus) protein is Cytochrome P450 monooxygenase lcsN.